A 721-amino-acid chain; its full sequence is Actin-like protein arp5 (721 aa).

The stretch at 266-368 forms a coiled coil; that stretch reads EAAAQEKSQE…RDQQRQEESE (103 aa). Residues 486-507 form a disordered region; that stretch reads ATLASEQPIQKRKRKDQSEDNF.

This sequence belongs to the actin family. As to quaternary structure, component of the INO80 chromatin remodeling complex.

It localises to the nucleus. Component of the INO80 complex which remodels chromatin by shifting nucleosomes and is involved in DNA repair. This is Actin-like protein arp5 (arp5) from Schizosaccharomyces pombe (strain 972 / ATCC 24843) (Fission yeast).